A 366-amino-acid polypeptide reads, in one-letter code: tRNA/tmRNA (uracil-C(5))-methyltransferase (366 aa).

The S-adenosyl-L-methionine site is built by Gln190, Tyr218, Asn223, Glu239, and Asp299. Residue Cys324 is the Nucleophile of the active site. The Proton acceptor role is filled by Glu358.

Belongs to the class I-like SAM-binding methyltransferase superfamily. RNA M5U methyltransferase family. TrmA subfamily.

It catalyses the reaction uridine(54) in tRNA + S-adenosyl-L-methionine = 5-methyluridine(54) in tRNA + S-adenosyl-L-homocysteine + H(+). The enzyme catalyses uridine(341) in tmRNA + S-adenosyl-L-methionine = 5-methyluridine(341) in tmRNA + S-adenosyl-L-homocysteine + H(+). Functionally, dual-specificity methyltransferase that catalyzes the formation of 5-methyluridine at position 54 (m5U54) in all tRNAs, and that of position 341 (m5U341) in tmRNA (transfer-mRNA). This is tRNA/tmRNA (uracil-C(5))-methyltransferase from Escherichia coli (strain ATCC 8739 / DSM 1576 / NBRC 3972 / NCIMB 8545 / WDCM 00012 / Crooks).